Consider the following 352-residue polypeptide: CD5 antigen-like (352 aa).

Residues 1-21 (MAPLFNLMLAILSIFVGSCFS) form the signal peptide. 3 consecutive SRCR domains span residues 27 to 128 (VQLV…AQCE), 141 to 241 (VRLV…MECE), and 246 to 348 (LKLV…VICT). Disulfide bonds link Cys-36/Cys-70, Cys-52/Cys-117, Cys-65/Cys-127, Cys-98/Cys-108, Cys-166/Cys-230, Cys-179/Cys-240, Cys-211/Cys-221, Cys-255/Cys-289, Cys-271/Cys-337, Cys-284/Cys-347, and Cys-317/Cys-327. Asn-99 carries an N-linked (GlcNAc...) asparagine glycan. Asn-229 carries N-linked (GlcNAc...) asparagine glycosylation.

As to quaternary structure, interacts with FASN; the interaction is direct. Interacts (via SRCR2 and SRCR3) with pentameric IgM (via Fc region); disulfide-linked. Post-translationally, N-glycosylated. N-glycan at Asn-99 possesses only alpha2,6-sialylated terminals, while Asn-229 possesses both alpha2,6-sialylated and non-sialylated terminals. N-glycosylation increases secretion. Specifically expressed in tissue macrophages. Expressed in thymus, liver, spleen and lymph nodes. Present in Th17 cells; mainly present in non-pathogenic Th17 cells.

It is found in the secreted. It localises to the cytoplasm. Functionally, secreted protein that acts as a key regulator of lipid synthesis: mainly expressed by macrophages in lymphoid and inflamed tissues and regulates mechanisms in inflammatory responses, such as infection or atherosclerosis. Able to inhibit lipid droplet size in adipocytes. Following incorporation into mature adipocytes via CD36-mediated endocytosis, associates with cytosolic FASN, inhibiting fatty acid synthase activity and leading to lipolysis, the degradation of triacylglycerols into glycerol and free fatty acids (FFA). CD5L-induced lipolysis occurs with progression of obesity: participates in obesity-associated inflammation following recruitment of inflammatory macrophages into adipose tissues, a cause of insulin resistance and obesity-related metabolic disease. Regulation of intracellular lipids mediated by CD5L has a direct effect on transcription regulation mediated by nuclear receptors ROR-gamma (RORC). Acts as a key regulator of metabolic switch in T-helper Th17 cells. Regulates the expression of pro-inflammatory genes in Th17 cells by altering the lipid content and limiting synthesis of cholesterol ligand of RORC, the master transcription factor of Th17-cell differentiation. CD5L is mainly present in non-pathogenic Th17 cells, where it decreases the content of polyunsaturated fatty acyls (PUFA), affecting two metabolic proteins MSMO1 and CYP51A1, which synthesize ligands of RORC, limiting RORC activity and expression of pro-inflammatory genes. Participates in obesity-associated autoimmunity via its association with IgM, interfering with the binding of IgM to Fcalpha/mu receptor and enhancing the development of long-lived plasma cells that produce high-affinity IgG autoantibodies. Also acts as an inhibitor of apoptosis in macrophages: promotes macrophage survival from the apoptotic effects of oxidized lipids in case of atherosclerosis. Involved in early response to microbial infection against various pathogens by acting as a pattern recognition receptor and by promoting autophagy. The polypeptide is CD5 antigen-like (Cd5l) (Mus musculus (Mouse)).